A 438-amino-acid polypeptide reads, in one-letter code: Chromosomal replication initiator protein DnaA (438 aa).

A domain I, interacts with DnaA modulators region spans residues 1–71 (MTTKEFLTII…CFEIYDGSKP (71 aa)). Residues 71 to 100 (PTIEIKLSNEKKSKKEILKEQTQNESTEST) are domain II. The tract at residues 101-315 (ILNPSYTFDS…GVLIRINASA (215 aa)) is domain III, AAA+ region. ATP is bound by residues Gly145, Gly147, Lys148, and Thr149. The interval 316-438 (SLLNQEITLP…LKNKIINSRE (123 aa)) is domain IV, binds dsDNA.

Belongs to the DnaA family. In terms of assembly, oligomerizes as a right-handed, spiral filament on DNA at oriC.

The protein resides in the cytoplasm. In terms of biological role, plays an essential role in the initiation and regulation of chromosomal replication. ATP-DnaA binds to the origin of replication (oriC) to initiate formation of the DNA replication initiation complex once per cell cycle. Binds the DnaA box (a 9 base pair repeat at the origin) and separates the double-stranded (ds)DNA. Forms a right-handed helical filament on oriC DNA; dsDNA binds to the exterior of the filament while single-stranded (ss)DNA is stabiized in the filament's interior. The ATP-DnaA-oriC complex binds and stabilizes one strand of the AT-rich DNA unwinding element (DUE), permitting loading of DNA polymerase. After initiation quickly degrades to an ADP-DnaA complex that is not apt for DNA replication. Binds acidic phospholipids. In Aliarcobacter butzleri (strain RM4018) (Arcobacter butzleri), this protein is Chromosomal replication initiator protein DnaA.